The sequence spans 761 residues: Complement factor B (761 aa).

Residues 1-22 (MESPQLCLVLLVLGFSSGGVSA) form the signal peptide. 3 consecutive Sushi domains span residues 32-97 (VSCS…ECRA), 98-157 (IRCP…ICDD), and 160-217 (GYCP…SCQD). Cystine bridges form between Cys34–Cys73, Cys59–Cys95, Cys100–Cys142, Cys128–Cys155, Cys162–Cys202, and Cys188–Cys215. N-linked (GlcNAc...) asparagine glycans are attached at residues Asn119 and Asn139. The 200-residue stretch at 267 to 466 (NIYLVLDGSD…DLENVFYQMI (200 aa)) folds into the VWFA domain. Mg(2+) is bound by residues Ser275 and Ser277. The N-linked (GlcNAc...) asparagine glycan is linked to Asn282. A Mg(2+)-binding site is contributed by Thr350. Asn375 carries N-linked (GlcNAc...) asparagine glycosylation. The region spanning 474–754 (LCGMVWEHKK…VLPWLKDKLK (281 aa)) is the Peptidase S1 domain. 5 disulfide bridges follow: Cys475–Cys593, Cys508–Cys524, Cys596–Cys612, Cys653–Cys679, and Cys692–Cys722. Residues His523 and Asp573 each act as charge relay system in the active site. Catalysis depends on Ser696, which acts as the Charge relay system.

This sequence belongs to the peptidase S1 family. Monomer. Interacts with complement C3b; this interaction is dependent on the presence of Mg(2+). In terms of assembly, catalytic component of the C3 convertase of the alternative complement pathway, also named C3bBb, composed of complement factor B Bb and complement C3b. Catalytic component of the C5 convertase of the alternative complement pathway, also named C3bBb3b, composed of complement factor B Bb and additional molecules of complement C3b. Interacts to CFP; this interaction contributes to the stabilization of the active C3-convertase enzyme complex. Mg(2+) is required as a cofactor. It depends on Mn(2+) as a cofactor. In terms of processing, cleaved by CFD following activation of the alternative complement system, generating Ba and Bb chains. Cleavage and activation takes place when CFB is already associated with complement C3b.

Its subcellular location is the secreted. It localises to the cell surface. It catalyses the reaction Cleavage of Arg-|-Ser bond in complement component C3 alpha-chain to yield C3a and C3b, and Arg-|-Xaa bond in complement component C5 alpha-chain to yield C5a and C5b.. Precursor of the catalytic component of the C3 and C5 convertase complexes of the alternative pathway of the complement system, a cascade of proteins that leads to phagocytosis and breakdown of pathogens and signaling that strengthens the adaptive immune system. The alternative complement pathway acts as an amplification loop that enhances other complement pathways (classical, lectin and GZMK) by promoting formation of additional C3 and C5 convertases. CFB is cleaved and activated by CFD to generate Ba and Bb chains; Bb chain constituting the catalytic component of the C3 and C5 convertases. Its function is as follows. Serine protease component of the complement C3 and C5 convertase complexes of the alternative complement pathway. Following cleavage and activation by factor D (CFD), forms the C3 convertase together with complement C3b. As part of the C3 convertase, cleaves and activates C3 into C3a anaphylatoxin and C3b opsonin, the next components of the complement pathways. When an additional complement C3b molecule binds to the C3 convertase, forms the C5 convertase, which cleaves and activates C5 into C5a anaphylatoxin and C5b component of the membrane attack complex. In terms of biological role, involved in proliferation and differentiation of preactivated B-lymphocytes, rapid spreading of peripheral blood monocytes, stimulation of lymphocyte blastogenesis and lysis of erythrocytes. The polypeptide is Complement factor B (Cfb) (Mus musculus (Mouse)).